The following is a 513-amino-acid chain: NADH-quinone oxidoreductase subunit N (513 aa).

14 helical membrane-spanning segments follow: residues 20–40 (SVGF…LIVV), 49–69 (STLL…FIYQ), 88–108 (FAIF…VITM), 117–137 (ISSM…MMMM), 144–164 (LMIF…AGYF), 178–198 (LIYG…IYGV), 219–239 (FVML…IGAV), 260–280 (LSVA…YVAL), 295–315 (WFTL…VVAL), 323–343 (LLAY…IVMD), 351–371 (LFYL…VVLI), 394–414 (GAAL…IGFI), 429–451 (IFMW…YMLI), and 474–494 (LVAQ…GLFF).

Belongs to the complex I subunit 2 family. In terms of assembly, NDH-1 is composed of 14 different subunits. Subunits NuoA, H, J, K, L, M, N constitute the membrane sector of the complex.

The protein localises to the cell inner membrane. It catalyses the reaction a quinone + NADH + 5 H(+)(in) = a quinol + NAD(+) + 4 H(+)(out). In terms of biological role, NDH-1 shuttles electrons from NADH, via FMN and iron-sulfur (Fe-S) centers, to quinones in the respiratory chain. The immediate electron acceptor for the enzyme in this species is believed to be a menaquinone. Couples the redox reaction to proton translocation (for every two electrons transferred, four hydrogen ions are translocated across the cytoplasmic membrane), and thus conserves the redox energy in a proton gradient. The chain is NADH-quinone oxidoreductase subunit N from Chlorobium chlorochromatii (strain CaD3).